A 267-amino-acid chain; its full sequence is Glutamate racemase (267 aa).

Substrate is bound by residues Asp-10–Ser-11 and Tyr-42–Gly-43. Cys-73 (proton donor/acceptor) is an active-site residue. A substrate-binding site is contributed by Asn-74 to Thr-75. Catalysis depends on Cys-183, which acts as the Proton donor/acceptor. A substrate-binding site is contributed by Thr-184–His-185.

It belongs to the aspartate/glutamate racemases family.

It carries out the reaction L-glutamate = D-glutamate. Its pathway is cell wall biogenesis; peptidoglycan biosynthesis. Functionally, provides the (R)-glutamate required for cell wall biosynthesis. The sequence is that of Glutamate racemase from Limosilactobacillus reuteri (strain DSM 20016) (Lactobacillus reuteri).